A 168-amino-acid polypeptide reads, in one-letter code: Gastrula zinc finger protein XlCGF7.1 (168 aa).

C2H2-type zinc fingers lie at residues 6–28 (FTCT…QRTH), 34–56 (FTCT…LKCH), 62–84 (FMCT…RKIH), 90–112 (YICT…QTVH), 118–140 (FTCS…QKIH), and 146–168 (FKCN…ERIH).

This sequence belongs to the krueppel C2H2-type zinc-finger protein family.

The protein resides in the nucleus. Its function is as follows. May be involved in transcriptional regulation. The protein is Gastrula zinc finger protein XlCGF7.1 of Xenopus laevis (African clawed frog).